Reading from the N-terminus, the 430-residue chain is 3-phosphoshikimate 1-carboxyvinyltransferase (430 aa).

3-phosphoshikimate-binding residues include lysine 23, serine 24, and arginine 28. A phosphoenolpyruvate-binding site is contributed by lysine 23. Residues glycine 95 and arginine 123 each contribute to the phosphoenolpyruvate site. 3-phosphoshikimate contacts are provided by serine 169, glutamine 171, aspartate 315, and lysine 342. Glutamine 171 contributes to the phosphoenolpyruvate binding site. The active-site Proton acceptor is aspartate 315. Phosphoenolpyruvate is bound by residues arginine 346 and arginine 388.

Belongs to the EPSP synthase family. Monomer.

Its subcellular location is the cytoplasm. The enzyme catalyses 3-phosphoshikimate + phosphoenolpyruvate = 5-O-(1-carboxyvinyl)-3-phosphoshikimate + phosphate. It functions in the pathway metabolic intermediate biosynthesis; chorismate biosynthesis; chorismate from D-erythrose 4-phosphate and phosphoenolpyruvate: step 6/7. Catalyzes the transfer of the enolpyruvyl moiety of phosphoenolpyruvate (PEP) to the 5-hydroxyl of shikimate-3-phosphate (S3P) to produce enolpyruvyl shikimate-3-phosphate and inorganic phosphate. This Streptococcus pyogenes serotype M2 (strain MGAS10270) protein is 3-phosphoshikimate 1-carboxyvinyltransferase.